The chain runs to 202 residues: Cold-regulated 413 plasma membrane protein 4 (202 aa).

The Extracellular portion of the chain corresponds to 1–42; the sequence is MGRGEFLAMKTEENAANLINSDMNEFVAAAKKLVKDVGMLGG. The chain crosses the membrane as a helical span at residues 43–63; that stretch reads VGFGTSVLQWAASIFAIYLLI. Topologically, residues 64–72 are cytoplasmic; the sequence is LDRTNWKTK. The chain crosses the membrane as a helical span at residues 73 to 93; that stretch reads MLTTLLVPYIFFTLPSVIFQF. The Extracellular segment spans residues 94–97; it reads FSGD. A helical transmembrane segment spans residues 98–118; that stretch reads FGKWIALIAIIVRLFFPKEFP. E119 is a topological domain (cytoplasmic). The chain crosses the membrane as a helical span at residues 120 to 140; it reads WLEIPVALILIVVVSPSLIAW. Residues 141–145 are Extracellular-facing; the sequence is TLRES. Residues 146–166 form a helical membrane-spanning segment; it reads WVGAVICLVIACYLFHEHIKA. The Cytoplasmic segment spans residues 167-181; sequence SGGFKNSFTQKNGIS. Residues 182-202 form a helical membrane-spanning segment; it reads NTIGIVALLVYPVWTIFFHIF.

The protein belongs to the Cold-regulated 413 protein family.

It is found in the cell membrane. This Arabidopsis thaliana (Mouse-ear cress) protein is Cold-regulated 413 plasma membrane protein 4.